Reading from the N-terminus, the 520-residue chain is V(D)J recombination-activating protein 2 (520 aa).

Zn(2+) is bound by residues cysteine 412, cysteine 416, cysteine 439, histidine 445, histidine 448, cysteine 451, cysteine 471, and histidine 474. A PHD-type; atypical zinc finger spans residues 415 to 477 (DCDMDRNTWE…KYFCNEHVEV (63 aa)).

This sequence belongs to the RAG2 family. Component of the RAG complex composed of core components rag1 and rag2. Expressed within the thymus, liver and spleen in juvenile frogs, and within the thymus and bone marrow of adults. A lower level expression is seen in the ovaries.

Its subcellular location is the nucleus. In terms of biological role, core component of the RAG complex, a multiprotein complex that mediates the DNA cleavage phase during V(D)J recombination. V(D)J recombination assembles a diverse repertoire of immunoglobulin and T-cell receptor genes in developing B and T lymphocytes through rearrangement of different V (variable), in some cases D (diversity), and J (joining) gene segments. DNA cleavage by the RAG complex occurs in 2 steps: a first nick is introduced in the top strand immediately upstream of the heptamer, generating a 3'-hydroxyl group that can attack the phosphodiester bond on the opposite strand in a direct transesterification reaction, thereby creating 4 DNA ends: 2 hairpin coding ends and 2 blunt, 5'-phosphorylated ends. In the RAG complex, rag2 is not the catalytic component but is required for all known catalytic activities mediated by RAG1. It probably acts as a sensor of chromatin state that recruits the RAG complex to H3K4me3. The sequence is that of V(D)J recombination-activating protein 2 (rag2) from Xenopus laevis (African clawed frog).